A 442-amino-acid polypeptide reads, in one-letter code: Cation channel sperm-associated protein 4 (442 aa).

Residues 1 to 66 (MSEKHKWWQQ…TQMYIKQLLR (66 aa)) are Cytoplasmic-facing. Residues 67–88 (HPAFQLLLAFLLLSNAITIALR) form a helical membrane-spanning segment. Topologically, residues 89-98 (TNSYLGQKHY) are extracellular. Residues 99–125 (ELFSTIDDIVLTILICEVLLGWLNGFW) form a helical membrane-spanning segment. Topologically, residues 126 to 129 (IFWK) are cytoplasmic. Residues 130-153 (DGWNILNFAIVFILFMGFFIKQLD) form a helical membrane-spanning segment. Over 154–156 (MVA) the chain is Extracellular. A helical membrane pass occupies residues 157-175 (ITYPLRVLRLVHVCMAVEP). The Cytoplasmic portion of the chain corresponds to 176-188 (LARIIKVILQSMP). A helical transmembrane segment spans residues 189–212 (DLANVMALILFFMLVFSVFGVTLF). Topologically, residues 213–222 (GAFVPKHFQN) are extracellular. An intramembrane region (helical; Pore-forming) is located at residues 223–234 (MGVALYTLFICI). Residues 235 to 255 (TQDGWLDIYTDFQMDEREYAM) lie on the Extracellular side of the membrane. A helical transmembrane segment spans residues 256 to 283 (EVGGAIYFAVFITLGAFIGLNLFVVVVT). The Cytoplasmic portion of the chain corresponds to 284 to 442 (TNLEQMMKTG…NMVNKHKFSH (159 aa)).

Belongs to the cation channel sperm-associated (TC 1.A.1.19) family. Component of the CatSper complex or CatSpermasome composed of the core pore-forming members CATSPER1, CATSPER2, CATSPER3 and CATSPER4 as well as auxiliary members CATSPERB, CATSPERG2, CATSPERD, CATSPERE, CATSPERZ, C2CD6/CATSPERT, SLCO6C1, TMEM249, TMEM262 and EFCAB9. HSPA1 may be an additional auxiliary complex member. The core complex members CATSPER1, CATSPER2, CATSPER3 and CATSPER4 form a heterotetrameric channel. The auxiliary CATSPERB, CATSPERG2, CATSPERD and CATSPERE subunits form a pavilion-like structure over the pore which stabilizes the complex through interactions with CATSPER4, CATSPER3, CATSPER1 and CATSPER2 respectively. SLCO6C1 interacts with CATSPERE and TMEM262/CATSPERH interacts with CATSPERB, further stabilizing the complex. C2CD6/CATSPERT interacts at least with CATSPERD and is required for targeting the CatSper complex in the flagellar membrane. As to expression, testis-specific.

It localises to the cell projection. It is found in the cilium. The protein resides in the flagellum membrane. It carries out the reaction Ca(2+)(in) = Ca(2+)(out). With respect to regulation, in contrast to the human ortholog, not activated by progesterone. Activated by intracellular alkalinization. In terms of biological role, pore-forming subunit of the CatSper complex, a sperm-specific voltage-gated calcium channel that plays a central role in sperm cell hyperactivation. Controls calcium entry to mediate the hyperactivated motility, a step needed for sperm motility which is essential late in the preparation of sperm for fertilization. The sequence is that of Cation channel sperm-associated protein 4 (Catsper4) from Mus musculus (Mouse).